The sequence spans 534 residues: High-affinity nicotinic acid transporter (534 aa).

The Extracellular segment spans residues 1–130; it reads MSNKFTMESP…DIHLVGTQYN (130 aa). The disordered stretch occupies residues 21–56; that stretch reads SPTNDGSEEKPTEVTFQEDEGHDASLHNRSHDKKSE. S27 is modified (phosphoserine). The helical transmembrane segment at 131–151 threads the bilayer; it reads TCVTVFFATYVLFDPIGTNLL. K152 is a topological domain (cytoplasmic). Residues 153-173 form a helical membrane-spanning segment; sequence IMGPPLMMSICLTCFGAISLG. Topologically, residues 174-187 are extracellular; sequence TAWVKNYAQLIVVR. A helical membrane pass occupies residues 188-208; sequence LLLGAFEGMIYPAINMYLSVC. The Cytoplasmic segment spans residues 209-217; the sequence is YRREQYALR. A helical transmembrane segment spans residues 218–238; the sequence is FAFVFSAACLSSSFGGLIAYG. The Extracellular segment spans residues 239–250; the sequence is CSKISGSLKDWQ. The helical transmembrane segment at 251 to 271 threads the bilayer; the sequence is YIYIVEGCISLGFVPFYAFGL. Topologically, residues 272–323 are cytoplasmic; it reads SKNLEDSWFFNKEEKEYISERYKTMNTFDPDEKFEWFQVWQAVKDVKTWASA. K283 participates in a covalent cross-link: Glycyl lysine isopeptide (Lys-Gly) (interchain with G-Cter in ubiquitin). Residues 324–344 form a helical membrane-spanning segment; it reads VALFGIDLTTFGLTVFLPIII. Topologically, residues 345 to 355 are extracellular; sequence TSMGFTNVRAQ. The chain crosses the membrane as a helical span at residues 356 to 376; the sequence is LMTVPIYFLTAIVFFICAVWS. Over 377 to 384 the chain is Cytoplasmic; sequence DRIKLRSP. A helical transmembrane segment spans residues 385–405; it reads FILGACLTTSIGIAIVLGSQV. At 406–410 the chain is on the extracellular side; the sequence is HGVRY. Residues 411 to 431 traverse the membrane as a helical segment; the sequence is FGVYILCMGIYVNAACNCLWL. The Cytoplasmic segment spans residues 432–444; it reads SGNTGNYFKRATA. The helical transmembrane segment at 445-465 threads the bilayer; sequence LGINLFFGSGSGLVSGQIFVA. Residues 466-474 are Extracellular-facing; it reads KDKPRYIKG. A helical transmembrane segment spans residues 475 to 495; the sequence is LSISLAFQVFSIFMTVVQIFL. The Cytoplasmic portion of the chain corresponds to 496–534; that stretch reads YKRENDKKKAIIDRCNELGEPIPYDERLSDKNPEFKYMY.

This sequence belongs to the major facilitator superfamily. Allantoate permease family.

Its subcellular location is the membrane. Its function is as follows. Involved in the uptake of nicotinic acid. This Saccharomyces cerevisiae (strain ATCC 204508 / S288c) (Baker's yeast) protein is High-affinity nicotinic acid transporter (TNA1).